A 599-amino-acid chain; its full sequence is Kinesin light chain 2 (599 aa).

Positions 78–143 (ILALSSHLGA…KQHLLFMSQI (66 aa)) form a coiled coil. Positions 154–163 (EKGDVPKDSL) are enriched in basic and acidic residues. The interval 154–188 (EKGDVPKDSLDDLFPNEDEQSPAPSPGGGDVAAQH) is disordered. A phosphoserine mark is found at Ser-174 and Ser-178. 5 TPR repeats span residues 197–230 (LRTLHNLVIQYASQGRYEVAVPLCKQALEDLEKT), 239–272 (ATMLNILALVYRDQNKYKDAAHLLNDALAIREKT), 281–314 (AATLNNLAVLYGKRGKYKEAEPLCKRALEIREKV), 323–356 (AKQLSNLALLCQNQGKAEEVEYYYRRALEIYATR), and 365–398 (AKTKNNLASCYLKQGKYQDAETLYKEILTRAHEK). Ser-443 is modified (phosphoserine). Residues 447 to 480 (NTTLRTLGALYRPEGKLEAAHTLEDCASRSRKQG) form a TPR 6 repeat. The segment at 492 to 541 (LLKDGSGRGHRRGSRDVAGPQSESDLEESGPAAEWSGDGSGSLRRSGSFG) is disordered. 2 positions are modified to phosphoserine: Ser-505 and Ser-515. Residues 532 to 541 (GSLRRSGSFG) show a composition bias toward low complexity. Phosphoserine occurs at positions 574, 575, and 582.

The protein belongs to the kinesin light chain family. As to quaternary structure, oligomeric complex composed of two heavy chains and two light chains. Interacts (via TPR repeats) with PLEKHM2.

It is found in the cytoplasm. It localises to the cytoskeleton. The protein localises to the lysosome membrane. In terms of biological role, kinesin is a microtubule-associated force-producing protein that plays a role in organelle transport. The light chain functions in coupling of cargo to the heavy chain or in the modulation of its ATPase activity. Through binding with PLEKHM2 and ARL8B, recruits kinesin-1 to lysosomes and hence direct lysosomes movement toward microtubule plus ends. This Mus musculus (Mouse) protein is Kinesin light chain 2.